The sequence spans 240 residues: tRNA (guanine-N(1)-)-methyltransferase (240 aa).

S-adenosyl-L-methionine contacts are provided by residues glycine 110 and 129–134 (LGDFVL).

The protein belongs to the RNA methyltransferase TrmD family. As to quaternary structure, homodimer.

The protein localises to the cytoplasm. It carries out the reaction guanosine(37) in tRNA + S-adenosyl-L-methionine = N(1)-methylguanosine(37) in tRNA + S-adenosyl-L-homocysteine + H(+). Its function is as follows. Specifically methylates guanosine-37 in various tRNAs. This is tRNA (guanine-N(1)-)-methyltransferase from Clostridium botulinum (strain Loch Maree / Type A3).